A 151-amino-acid polypeptide reads, in one-letter code: Austinoid biosynthesis clusters protein F (151 aa).

This sequence belongs to the trt14 isomerase family. As to quaternary structure, homodimer.

The protein operates within secondary metabolite biosynthesis; terpenoid biosynthesis. Its function is as follows. Part of the gene cluster B that mediates the biosynthesis of the fungal meroterpenoid acetoxydehydroaustin. The first step of the pathway is the synthesis of 3,5-dimethylorsellinic acid by the polyketide synthase ausA. 3,5-dimethylorsellinic acid is then prenylated by the polyprenyl transferase ausN. Further epoxidation by the FAD-dependent monooxygenase ausM and cyclization by the probable terpene cyclase ausL lead to the formation of protoaustinoid A. Protoaustinoid A is then oxidized to spiro-lactone preaustinoid A3 by the combined action of the FAD-binding monooxygenases ausB and ausC, and the dioxygenase ausE. Acid-catalyzed keto-rearrangement and ring contraction of the tetraketide portion of preaustinoid A3 by ausJ lead to the formation of preaustinoid A4. The aldo-keto reductase ausK, with the help of ausH, is involved in the next step by transforming preaustinoid A4 into isoaustinone which is in turn hydroxylated by the P450 monooxygenase ausI to form austinolide. The cytochrome P450 monooxygenase ausG then modifies austinolide to austinol. Austinol is further acetylated to austin by the O-acetyltransferase ausP, which spontaneously changes to dehydroaustin. The cytochrome P450 monooxygenase then converts dehydroaustin is into 7-dehydrodehydroaustin. The hydroxylation catalyzed by ausR permits the second O-acetyltransferase ausQ to add an additional acetyl group to the molecule, leading to the formation of acetoxydehydroaustin. Due to genetic rearrangements of the clusters and the subsequent loss of some enzymes, the end product of the Penicillium brasilianum austinoid biosynthesis clusters is acetoxydehydroaustin. The protein is Austinoid biosynthesis clusters protein F of Penicillium brasilianum.